Consider the following 377-residue polypeptide: Unsaturated glucuronyl hydrolase (377 aa).

Asp-88 functions as the Nucleophile in the catalytic mechanism. Residue Asp-149 is the Proton donor of the active site.

The protein belongs to the glycosyl hydrolase 88 family. In terms of assembly, monomer.

It is found in the cytoplasm. It carries out the reaction beta-D-Delta(4)-GlcA-(1-&gt;4)-beta-D-Glc-(1-&gt;4)-alpha-L-Rha-(1-&gt;3)-D-Glc + H2O = beta-D-Glc-(1-&gt;4)-alpha-L-Rha-(1-&gt;3)-D-Glc + 5-dehydro-4-deoxy-D-glucuronate. Partially inhibited by divalent metal ions such as calcium, copper, iron and mercury. Functionally, catalyzes the hydrolysis of oligosaccharides with unsaturated glucuronyl residues at the non-reducing terminal, to a sugar or an amino sugar, and an unsaturated D-glucuronic acid (GlcA), which is nonenzymatically converted immediately to alpha-keto acid. The protein is Unsaturated glucuronyl hydrolase (ugl) of Bacillus sp. (strain GL1).